The primary structure comprises 106 residues: Transcription and mRNA export factor SUS1 (106 aa).

This sequence belongs to the ENY2 family. As to quaternary structure, component of the nuclear pore complex (NPC)-associated TREX-2 complex (transcription and export complex 2), composed of at least SUS1, SAC3, THP1, SEM1, and CDC31. TREX-2 contains 2 SUS1 chains. The TREX-2 complex interacts with the nucleoporin NUP1. Component of the 1.8 MDa SAGA transcription coactivator-HAT complex. SAGA is built of 5 distinct domains with specialized functions. Within the SAGA complex, SUS1, SGF11, SGF73 and UBP8 form an additional subcomplex of SAGA called the DUB module (deubiquitination module). Interacts directly with THP1, SAC3, SGF11, and with the RNA polymerase II.

Its subcellular location is the nucleus. The protein localises to the nucleoplasm. It localises to the cytoplasm. It is found in the P-body. Its function is as follows. Involved in mRNA export coupled transcription activation by association with both the TREX-2 and the SAGA complexes. At the promoters, SAGA is required for recruitment of the basal transcription machinery. It influences RNA polymerase II transcriptional activity through different activities such as TBP interaction and promoter selectivity, interaction with transcription activators, and chromatin modification through histone acetylation and deubiquitination. Within the SAGA complex, participates in a subcomplex required for deubiquitination of H2B and for the maintenance of steady-state H3 methylation levels. The TREX-2 complex functions in docking export-competent ribonucleoprotein particles (mRNPs) to the nuclear entrance of the nuclear pore complex (nuclear basket). TREX-2 participates in mRNA export and accurate chromatin positioning in the nucleus by tethering genes to the nuclear periphery. May also be involved in cytoplasmic mRNA decay by interaction with components of P-bodies. This chain is Transcription and mRNA export factor SUS1, found in Mycosarcoma maydis (Corn smut fungus).